The primary structure comprises 113 residues: UPF0122 protein PEPE_0845 (113 aa).

It belongs to the UPF0122 family.

Functionally, might take part in the signal recognition particle (SRP) pathway. This is inferred from the conservation of its genetic proximity to ftsY/ffh. May be a regulatory protein. The protein is UPF0122 protein PEPE_0845 of Pediococcus pentosaceus (strain ATCC 25745 / CCUG 21536 / LMG 10740 / 183-1w).